We begin with the raw amino-acid sequence, 259 residues long: Glutamate racemase (259 aa).

Substrate is bound by residues 12–13 (DS) and 44–45 (YG). The active-site Proton donor/acceptor is cysteine 75. Substrate is bound at residue 76-77 (NT). Cysteine 186 functions as the Proton donor/acceptor in the catalytic mechanism. 187 to 188 (TH) contributes to the substrate binding site.

Belongs to the aspartate/glutamate racemases family.

It carries out the reaction L-glutamate = D-glutamate. The protein operates within cell wall biogenesis; peptidoglycan biosynthesis. Its function is as follows. Provides the (R)-glutamate required for cell wall biosynthesis. The sequence is that of Glutamate racemase from Clostridium novyi (strain NT).